The primary structure comprises 355 residues: Peptide chain release factor 1 (355 aa).

An N5-methylglutamine modification is found at Q233. Positions 280–293 (KRRQKEQERSDSRR) are enriched in basic and acidic residues. The tract at residues 280 to 310 (KRRQKEQERSDSRRGQVGSGDRSERIRTYNF) is disordered.

It belongs to the prokaryotic/mitochondrial release factor family. Post-translationally, methylated by PrmC. Methylation increases the termination efficiency of RF1.

It is found in the cytoplasm. Functionally, peptide chain release factor 1 directs the termination of translation in response to the peptide chain termination codons UAG and UAA. This Rickettsia prowazekii (strain Madrid E) protein is Peptide chain release factor 1 (prfA).